We begin with the raw amino-acid sequence, 510 residues long: DAP3-binding cell death enhancer 1 (510 aa).

The transit peptide at 1-23 (MWRLTGILGRALPRLLGPGFRGI) directs the protein to the mitochondrion. Disordered regions lie at residues 19–61 (GFRG…SRDP) and 142–185 (VLPR…SGLL). The propeptide at 24–101 (TPKPTSSDGS…AVLALHLARQ (78 aa)) is extended MTS. Residues 35 to 45 (TTSPTLPLTRL) are compositionally biased toward low complexity. 2 stretches are compositionally biased toward basic and acidic residues: residues 46 to 61 (SFDR…SRDP) and 155 to 167 (GLRE…EDHP). Residues 169–181 (APSQCLPSDSSLR) are compositionally biased toward polar residues. TPR repeat units lie at residues 213-245 (AHPP…QLSV), 246-278 (AITF…RGYS), 279-313 (KAQY…VQGH), 314-351 (SLAQ…DSGL), 352-385 (TEAQ…SNGD), 386-423 (SQSR…GNEP), and 471-499 (ASST…TIPS). The SIFI-degron signature appears at 307 to 326 (LAAVQGHSLAQYRYARCLLQ).

The protein belongs to the DELE1 family. Interacts with DAP3. In terms of assembly, interacts (via TPR repeats) with EIF2AK1/HRI; activating the protein kinase activity of EIF2AK1/HRI, thereby promoting the integrated stress response (ISR). As to quaternary structure, homooctamer; oligomerization is required to activate EIF2AK1/HRI. Interacts (via TPR repeats) with EIF2AK1/HRI; activating the protein kinase activity of EIF2AK1/HRI, thereby promoting the integrated stress response (ISR). Unstable protein in absence of stress: imported in the mitochondrial matrix following processing by the mitochondrial-processing peptidase (MPP), where it is degraded by LONP1. Stabilized in response to iron deficiency: iron deficiency impairs mitochondrial import, promoting localization at the mitochondrial surface and stabilization. Cleaved by OMA1 in response to mitochondrial stress, generating the DAP3-binding cell death enhancer 1 short form (DELE1(S) or S-DELE1) that accumulates in the cytosol and activates the protein kinase activity of EIF2AK1/HRI. Protein cleavage by OMA1 can take place at different positions, and apparently does not require a specific sequence motif. Post-translationally, ubiquitinated and degraded by the SIFI complex once the mitochondrial stress has been resolved, thereby providing stress response silencing. Within the SIFI complex, UBR4 initiates ubiquitin chain that are further elongated or branched by KCMF1.

The protein resides in the mitochondrion. It is found in the mitochondrion outer membrane. Its subcellular location is the mitochondrion inner membrane. It localises to the cytoplasm. The protein localises to the cytosol. In terms of biological role, protein kinase activator that acts as a key activator of the integrated stress response (ISR) following various stresses, such as iron deficiency, mitochondrial stress or mitochondrial DNA breaks. Detects impaired protein import and processing in mitochondria, activating the ISR. May also required for the induction of death receptor-mediated apoptosis through the regulation of caspase activation. Protein kinase activator that activates the ISR in response to iron deficiency: iron deficiency impairs mitochondrial import, promoting DELE1 localization at the mitochondrial surface, where it binds and activates EIF2AK1/HRI to trigger the ISR. Functionally, protein kinase activator generated by protein cleavage in response to mitochondrial stress, which accumulates in the cytosol and specifically binds to and activates the protein kinase activity of EIF2AK1/HRI. It thereby activates the integrated stress response (ISR): EIF2AK1/HRI activation promotes eIF-2-alpha (EIF2S1) phosphorylation, leading to a decrease in global protein synthesis and the induction of selected genes, including the transcription factor ATF4, the master transcriptional regulator of the ISR. Also acts as an activator of PRKN-independent mitophagy: activates the protein kinase activity of EIF2AK1/HRI in response to mitochondrial damage, promoting eIF-2-alpha (EIF2S1) phosphorylation, leading to mitochondrial localization of EIF2S1 followed by induction of mitophagy. In Mus musculus (Mouse), this protein is DAP3-binding cell death enhancer 1.